Consider the following 325-residue polypeptide: Protease HtpX homolog 2 (325 aa).

Transmembrane regions (helical) follow at residues I17–F37 and L42–G62. Zn(2+) is bound at residue H146. E147 is an active-site residue. Residue H150 participates in Zn(2+) binding. Transmembrane regions (helical) follow at residues L158–W178 and I195–L215. E222 contacts Zn(2+).

This sequence belongs to the peptidase M48B family. It depends on Zn(2+) as a cofactor.

It is found in the cell membrane. The polypeptide is Protease HtpX homolog 2 (Sulfurisphaera tokodaii (strain DSM 16993 / JCM 10545 / NBRC 100140 / 7) (Sulfolobus tokodaii)).